Consider the following 279-residue polypeptide: GATA transcription factor 15 (279 aa).

The disordered stretch occupies residues 52–94 (AYDDHSTVTTSPSSPSSSSTGSVDCTLSLGTPSSRRAEPVAAA). Over residues 58 to 74 (TVTTSPSSPSSSSTGSV) the composition is skewed to low complexity. A GATA-type zinc finger spans residues 154–179 (CANCGTASTPLWRNGPRGPKSLCNAC).

The protein belongs to the type IV zinc-finger family. Class B subfamily. In terms of tissue distribution, highly expressed in inflorescences. Expressed in vascular bundles of root stele within the elongation zones, of elongating upper internodes and of the junctions of leaf blades and sheaths.

Its function is as follows. Probable transcription factor that regulates organogenesis during transition from the vegetative to the reproductive phase. Regulates the expression of CYP78A11/PLA1, HD3A and MADS1 during reproductive development in rice. May act upstream of CYP78A11/PLA1 during panicle development. Acts independently of the photoperiodic and gibberellin signaling pathways. The polypeptide is GATA transcription factor 15 (Oryza sativa subsp. japonica (Rice)).